The following is a 278-amino-acid chain: Large ribosomal subunit protein uL2 (278 aa).

Residues Asn-212–Gly-278 are disordered. A compositionally biased stretch (basic residues) spans Tyr-257–Gly-278.

Belongs to the universal ribosomal protein uL2 family. Part of the 50S ribosomal subunit. Forms a bridge to the 30S subunit in the 70S ribosome.

In terms of biological role, one of the primary rRNA binding proteins. Required for association of the 30S and 50S subunits to form the 70S ribosome, for tRNA binding and peptide bond formation. It has been suggested to have peptidyltransferase activity; this is somewhat controversial. Makes several contacts with the 16S rRNA in the 70S ribosome. This Helicobacter pylori (strain Shi470) protein is Large ribosomal subunit protein uL2.